The primary structure comprises 472 residues: Alanine--anticapsin ligase (472 aa).

E109 is a binding site for Mg(2+). ATP-binding residues include K138 and K178. Residues 142–355 form the ATP-grasp domain; sequence RDAFNKAGVK…MAQLLLDVLC (214 aa). L182 provides a ligand contact to Mg(2+). ATP-binding positions include 184–185, 226–229, and Q268; these read SS and EEFL. Residues E273 and 309 to 311 contribute to the substrate site; that span reads HTE. Residues E311 and E324 each coordinate Mg(2+). 328–331 contributes to the substrate binding site; sequence RFAG.

Monomer or homodimer. It depends on Mg(2+) as a cofactor.

The enzyme catalyses L-anticapsin + L-alanine + ATP = bacilysin + ADP + phosphate + H(+). It participates in antibiotic biosynthesis; bacilysin biosynthesis. In terms of biological role, part of the bacABCDEFG operon responsible for the biosynthesis of bacilysin, an irreversible inactivator of the glutaminase domain of glucosamine synthetase. Catalyzes the formation of alpha-dipeptides from various L-amino acids in the presence of ATP. In vivo catalyzes the ligation of L-alanine and L-anticapsin (epoxycyclohexanonyl-Ala) to produce the final bacilysin antibiotic (L-Ala-L-4S-cyclohexenonyl-Ala dipeptide). The substrate specificity is restricted to small amino acids such as L-Ala, for the N-terminal end of the dipeptide, whereas a wide range of hydrophobic amino acids such as L-Phe, L-Tyr and L-Met are recognized for the C-terminal end. In Bacillus subtilis (strain 168), this protein is Alanine--anticapsin ligase.